A 210-amino-acid polypeptide reads, in one-letter code: 2-hydroxy-3-keto-5-methylthiopentenyl-1-phosphate phosphatase (210 aa).

The protein belongs to the HAD-like hydrolase superfamily. MtnX family.

It carries out the reaction 2-hydroxy-5-methylsulfanyl-3-oxopent-1-enyl phosphate + H2O = 1,2-dihydroxy-5-(methylsulfanyl)pent-1-en-3-one + phosphate. It participates in amino-acid biosynthesis; L-methionine biosynthesis via salvage pathway; L-methionine from S-methyl-5-thio-alpha-D-ribose 1-phosphate: step 4/6. Its function is as follows. Dephosphorylates 2-hydroxy-3-keto-5-methylthiopentenyl-1-phosphate (HK-MTPenyl-1-P) yielding 1,2-dihydroxy-3-keto-5-methylthiopentene (DHK-MTPene). The chain is 2-hydroxy-3-keto-5-methylthiopentenyl-1-phosphate phosphatase from Microcystis aeruginosa (strain NIES-843 / IAM M-2473).